We begin with the raw amino-acid sequence, 801 residues long: Phenylalanine--tRNA ligase beta subunit (801 aa).

Residues 39-148 (AGSFTGVKVG…EDAVIGTDFR (110 aa)) enclose the tRNA-binding domain. Residues 401-476 (PKPNKVALRR…RIYGYDNIPN (76 aa)) form the B5 domain. Positions 454, 460, 463, and 464 each coordinate Mg(2+). Residues 707–800 (SKFPSNRRDI…VSEKFGAALR (94 aa)) enclose the FDX-ACB domain.

This sequence belongs to the phenylalanyl-tRNA synthetase beta subunit family. Type 1 subfamily. Tetramer of two alpha and two beta subunits. It depends on Mg(2+) as a cofactor.

Its subcellular location is the cytoplasm. It carries out the reaction tRNA(Phe) + L-phenylalanine + ATP = L-phenylalanyl-tRNA(Phe) + AMP + diphosphate + H(+). This chain is Phenylalanine--tRNA ligase beta subunit, found in Vibrio parahaemolyticus serotype O3:K6 (strain RIMD 2210633).